The chain runs to 77 residues: uncharacterized protein (77 aa).

The next 2 helical transmembrane spans lie at 3-23 (FNFI…SFLF) and 35-55 (IGAI…VALL).

Its subcellular location is the cell membrane. This is an uncharacterized protein from Haemophilus influenzae (strain ATCC 51907 / DSM 11121 / KW20 / Rd).